Consider the following 110-residue polypeptide: Large ribosomal subunit protein uL23c (110 aa).

This sequence belongs to the universal ribosomal protein uL23 family. As to quaternary structure, part of the 50S ribosomal subunit.

It is found in the plastid. The protein localises to the chloroplast. Its function is as follows. Binds to 23S rRNA. The chain is Large ribosomal subunit protein uL23c (rpl23) from Porphyra purpurea (Red seaweed).